A 304-amino-acid chain; its full sequence is tRNA-uridine aminocarboxypropyltransferase 1 (304 aa).

The residue at position 2 (Ser2) is an N-acetylserine. A DXTW motif is present at residues 206–209; the sequence is DSTW.

This sequence belongs to the TDD superfamily. DTWD1 family.

The protein resides in the nucleus. It catalyses the reaction a uridine in tRNA + S-adenosyl-L-methionine = a 3-[(3S)-3-amino-3-carboxypropyl]uridine in tRNA + S-methyl-5'-thioadenosine + H(+). Its function is as follows. Catalyzes the formation of 3-(3-amino-3-carboxypropyl)uridine (acp3U) at position 20 in the D-loop of several cytoplasmic tRNAs (acp3U(20)). In Pongo abelii (Sumatran orangutan), this protein is tRNA-uridine aminocarboxypropyltransferase 1.